The following is a 138-amino-acid chain: Translation initiation factor 5A (138 aa).

Hypusine is present on Lys37.

The protein belongs to the eIF-5A family.

Its subcellular location is the cytoplasm. In terms of biological role, functions by promoting the formation of the first peptide bond. The polypeptide is Translation initiation factor 5A (Pyrococcus furiosus (strain ATCC 43587 / DSM 3638 / JCM 8422 / Vc1)).